A 214-amino-acid polypeptide reads, in one-letter code: Thymidylate kinase (214 aa).

10 to 17 (GIDGCGKT) is a binding site for ATP.

The protein belongs to the thymidylate kinase family.

It carries out the reaction dTMP + ATP = dTDP + ADP. In terms of biological role, phosphorylation of dTMP to form dTDP in both de novo and salvage pathways of dTTP synthesis. The sequence is that of Thymidylate kinase from Prochlorococcus marinus subsp. pastoris (strain CCMP1986 / NIES-2087 / MED4).